The chain runs to 175 residues: Transcription factor HES-3 (175 aa).

The bHLH domain occupies 1 to 49; the sequence is MEKKRRARINVSLEQLRSLLERHYSHQIRKRKLEKADILELSVKYMRSL. Positions 65 to 98 constitute an Orange domain; it reads YPSGFQGGLRGVSQRLRPGEGDSGLRCPLLLQRR. Positions 126 to 166 are disordered; sequence RAAGGSHSPQSPLPLPGGLLESSTDVVAPHPASNCQAESTR. Positions 129-148 are enriched in low complexity; sequence GGSHSPQSPLPLPGGLLESS. Residues 172 to 175 carry the WRPW motif motif; the sequence is WRPW.

Transcription repression requires formation of a complex with a corepressor protein of the Groucho/TLE family.

It is found in the nucleus. Transcriptional repressor of genes that require a bHLH protein for their transcription. The sequence is that of Transcription factor HES-3 (Hes3) from Mus musculus (Mouse).